Reading from the N-terminus, the 513-residue chain is V-type proton ATPase subunit B, kidney isoform (513 aa).

Arg394 provides a ligand contact to ATP. Residues 510-513 (DTAL) carry the PDZ-binding motif.

Belongs to the ATPase alpha/beta chains family. In terms of assembly, V-ATPase is a heteromultimeric enzyme made up of two complexes: the ATP-hydrolytic V1 complex and the proton translocation V0 complex. The V1 complex consists of three catalytic AB heterodimers that form a heterohexamer, three peripheral stalks each consisting of EG heterodimers, one central rotor including subunits D and F, and the regulatory subunits C and H. The proton translocation complex V0 consists of the proton transport subunit a, a ring of proteolipid subunits c9c'', rotary subunit d, subunits e and f, and the accessory subunits ATP6AP1/Ac45 and ATP6AP2/PRR. Forms a complex with NHERF1 and SCL4A7. As to expression, kidney; localizes to early distal nephron, encompassing thick ascending limbs and distal convoluted tubules (at protein level). Expressed in the cochlea and endolymphatic sac.

The protein resides in the apical cell membrane. It localises to the basolateral cell membrane. Non-catalytic subunit of the V1 complex of vacuolar(H+)-ATPase (V-ATPase), a multisubunit enzyme composed of a peripheral complex (V1) that hydrolyzes ATP and a membrane integral complex (V0) that translocates protons. V-ATPase is responsible for acidifying and maintaining the pH of intracellular compartments and in some cell types, is targeted to the plasma membrane, where it is responsible for acidifying the extracellular environment. Essential for the proper assembly and activity of V-ATPase. In renal intercalated cells, mediates secretion of protons (H+) into the urine thereby ensuring correct urinary acidification. Required for optimal olfactory function by mediating the acidification of the nasal olfactory epithelium. The polypeptide is V-type proton ATPase subunit B, kidney isoform (ATP6V1B1) (Homo sapiens (Human)).